The following is a 294-amino-acid chain: Shikimate dehydrogenase (NADP(+)) (294 aa).

Shikimate-binding positions include 25-27 (SAS) and threonine 72. Lysine 76 serves as the catalytic Proton acceptor. The shikimate site is built by asparagine 97 and aspartate 112. NADP(+) contacts are provided by residues 136-140 (GAGGA) and threonine 234. Tyrosine 236 contacts shikimate. An NADP(+)-binding site is contributed by glycine 257.

It belongs to the shikimate dehydrogenase family. Homodimer.

The catalysed reaction is shikimate + NADP(+) = 3-dehydroshikimate + NADPH + H(+). Its pathway is metabolic intermediate biosynthesis; chorismate biosynthesis; chorismate from D-erythrose 4-phosphate and phosphoenolpyruvate: step 4/7. In terms of biological role, involved in the biosynthesis of the chorismate, which leads to the biosynthesis of aromatic amino acids. Catalyzes the reversible NADPH linked reduction of 3-dehydroshikimate (DHSA) to yield shikimate (SA). The sequence is that of Shikimate dehydrogenase (NADP(+)) from Symbiobacterium thermophilum (strain DSM 24528 / JCM 14929 / IAM 14863 / T).